The chain runs to 34 residues: Photosystem II reaction center protein M (34 aa).

A helical transmembrane segment spans residues 7 to 27; that stretch reads GFVASLMFILVPAIFLIVLYI.

Belongs to the PsbM family. In terms of assembly, PSII is composed of 1 copy each of membrane proteins PsbA, PsbB, PsbC, PsbD, PsbE, PsbF, PsbH, PsbI, PsbJ, PsbK, PsbL, PsbM, PsbT, PsbX, PsbY, PsbZ, Psb30/Ycf12, peripheral proteins PsbO, CyanoQ (PsbQ), PsbU, PsbV and a large number of cofactors. It forms dimeric complexes.

Its subcellular location is the cellular thylakoid membrane. One of the components of the core complex of photosystem II (PSII). PSII is a light-driven water:plastoquinone oxidoreductase that uses light energy to abstract electrons from H(2)O, generating O(2) and a proton gradient subsequently used for ATP formation. It consists of a core antenna complex that captures photons, and an electron transfer chain that converts photonic excitation into a charge separation. This subunit is found at the monomer-monomer interface. The protein is Photosystem II reaction center protein M of Synechococcus sp. (strain CC9605).